Consider the following 525-residue polypeptide: uncharacterized protein (525 aa).

Composition is skewed to polar residues over residues L139–G149 and S336–S349. Disordered regions lie at residues L139–P158 and P330–T356.

This is an uncharacterized protein from Treponema pallidum (strain Nichols).